Here is a 341-residue protein sequence, read N- to C-terminus: N-acetyl-gamma-glutamyl-phosphate reductase (341 aa).

The active site involves cysteine 151.

Belongs to the NAGSA dehydrogenase family. Type 1 subfamily.

The protein localises to the cytoplasm. The catalysed reaction is N-acetyl-L-glutamate 5-semialdehyde + phosphate + NADP(+) = N-acetyl-L-glutamyl 5-phosphate + NADPH + H(+). Its pathway is amino-acid biosynthesis; L-arginine biosynthesis; N(2)-acetyl-L-ornithine from L-glutamate: step 3/4. Catalyzes the NADPH-dependent reduction of N-acetyl-5-glutamyl phosphate to yield N-acetyl-L-glutamate 5-semialdehyde. The sequence is that of N-acetyl-gamma-glutamyl-phosphate reductase from Chlorobaculum tepidum (strain ATCC 49652 / DSM 12025 / NBRC 103806 / TLS) (Chlorobium tepidum).